The following is a 154-amino-acid chain: MILTVKPLQGKECNVQVTEDEKVSTVKELVSERLNIPANQQRLLYKGKALADEHRLSDYSIGPEAKLNLVVRPAGERSGVAGMASSSSAVSGVWQTLSTVLAKHFSPADAAKVQEQLVKDYERSLRQLSLDDIERLAGRLLHPDSEGMDTSYMD.

The Ubiquitin-like domain maps to 1 to 76; that stretch reads MILTVKPLQG…LNLVVRPAGE (76 aa).

In terms of assembly, component of the BAT3 complex.

The protein localises to the cytoplasm. Its subcellular location is the cytosol. Its function is as follows. Component of the BAT3 complex, a multiprotein complex involved in the post-translational delivery of tail-anchored (TA) membrane proteins to the endoplasmic reticulum membrane. TA membrane proteins, also named type II transmembrane proteins, contain a single C-terminal transmembrane region. This is Ubiquitin-like protein 4A-A (ubl4aa) from Salmo salar (Atlantic salmon).